The sequence spans 291 residues: Gamma-sarcoglycan (291 aa).

At 1–37 (MVREQYTTVTEGTHIERPENQHIYKIGIYGWRKRCLY) the chain is on the cytoplasmic side. A helical; Signal-anchor for type II membrane protein transmembrane segment spans residues 38–58 (LFVLLLLAILVVNLALTIWIL). Over 59–291 (KVMWFSPIGM…TCEEHSHVCL (233 aa)) the chain is Extracellular. A glycan (N-linked (GlcNAc...) asparagine) is linked at Asn110. 2 disulfides stabilise this stretch: Cys265/Cys290 and Cys267/Cys283.

The protein belongs to the sarcoglycan beta/delta/gamma/zeta family. Interacts with the syntrophin SNTA1 and FLNC. Cross-link to form 2 major subcomplexes: one consisting of SGCB, SGCD and SGCG and the other consisting of SGCB and SGCD. The association between SGCB and SGCG is particularly strong while SGCA is loosely associated with the other sarcoglycans. As to expression, most strongly expressed in skeletal and heart muscle. Also detected in proliferating myoblasts.

The protein resides in the cell membrane. Its subcellular location is the sarcolemma. It localises to the cytoplasm. It is found in the cytoskeleton. Its function is as follows. Component of the sarcoglycan complex, a subcomplex of the dystrophin-glycoprotein complex which forms a link between the F-actin cytoskeleton and the extracellular matrix. This Mus musculus (Mouse) protein is Gamma-sarcoglycan (Sgcg).